Here is a 234-residue protein sequence, read N- to C-terminus: Fibrillarin-like rRNA/tRNA 2'-O-methyltransferase (234 aa).

S-adenosyl-L-methionine contacts are provided by residues 91 to 92 (TT), 110 to 111 (EF), 137 to 138 (DA), and 157 to 160 (DVAQ).

This sequence belongs to the methyltransferase superfamily. Fibrillarin family. Interacts with nop5. Component of box C/D small ribonucleoprotein (sRNP) particles that contain rpl7ae, FlpA and nop5, plus a guide RNA.

Functionally, involved in pre-rRNA and tRNA processing. Utilizes the methyl donor S-adenosyl-L-methionine to catalyze the site-specific 2'-hydroxyl methylation of ribose moieties in rRNA and tRNA. Site specificity is provided by a guide RNA that base pairs with the substrate. Methylation occurs at a characteristic distance from the sequence involved in base pairing with the guide RNA. The sequence is that of Fibrillarin-like rRNA/tRNA 2'-O-methyltransferase from Pyrobaculum calidifontis (strain DSM 21063 / JCM 11548 / VA1).